The primary structure comprises 149 residues: Alpha-crystallin A chain (149 aa).

Residues 41–149 (LFRSVLESGI…DASHGERPIP (109 aa)) form the sHSP domain. 4 residues coordinate Zn(2+): histidine 89, glutamate 91, histidine 96, and histidine 143.

Belongs to the small heat shock protein (HSP20) family. Heteropolymer composed of three CRYAA and one CRYAB subunits. Inter-subunit bridging via zinc ions enhances stability, which is crucial as there is no protein turn over in the lens. Can also form homodimers and homotetramers (dimers of dimers) which serve as the building blocks of homooligomers. Within homooligomers, the zinc-binding motif is created from residues of 3 different molecules. His-89 and Glu-91 from one molecule are ligands of the zinc ion, and His-96 and His-143 residues from additional molecules complete the site with tetrahedral coordination geometry. Part of a complex required for lens intermediate filament formation composed of BFSP1, BFSP2 and CRYAA.

The protein resides in the cytoplasm. Its subcellular location is the nucleus. Functionally, contributes to the transparency and refractive index of the lens. May act as a chaperone, preventing aggregation of various proteins under a wide range of stress conditions. This Columba livia (Rock dove) protein is Alpha-crystallin A chain (CRYAA).